The chain runs to 908 residues: MINGRYQKEDVVNNNNNLNLNLIEKTLNDLTIKNNTNINNNNTNNKNTNYYNNNNFNNNNNNNNNNNNNNNNINNNNNNNKYLNNSHNNNNNNNNNNNNNNNNNNNNNNNEINNNNNNVLSHSSLSGKGGSTTYETTSYTTSITSSRDTGTISTSYESSSSSSSSSSSSLYDDDEYSDYSDSSDSIDSYVNHRQALSKSQQQQHLQQQQDQPQPLHSSMGAISNEKPPSPTNQQQQQQHHHPKHNIELPKTSSFGLQPNSSIPHKKSRSDFDFIRTIGKGAYGKVKLVIEKETQLIFASKILNKKLIIKEKKAKYVNTEKTILDSLDNPNIVKLFYTFQDENNLYFILEYCPNGDLLGALKKAGCFSIDVVRFYAAEILIALEYLHGKGIAHRDLKPENILLGKNQHLKLSDFGSAKQLSIGSHHKGSRSGSFCGTAEYVCPELLTEKSAGVEADIWSYGCLLYQLVSGKLPFKGFNEYQTFLLITKREFSYPDNFDKCCMNLIDQLLDLDPYKRPTISEIKNHEFFSSIQDWSSIPSQTPPPIEQMVPQSPFPSPNSSLRLKKRSLSVGSPINSSLTYLSQPPIKPLNLDNSNIDYNDFENNQIISNNNNNNNNTTTTTTTTTTSANTSGSTNNTLYFTSPNVTSPPTSMSSNNTPRYINPLPTQSTTTTTTKPAYSSTPSSTILKSTPPPPILSSCSSNNLLGKSSNQQYQPFQFHQQQQQQQQQQQRERSSTTTPSPTFLSNHHNQHQKNLQQSFSSIDKSSFSTSSPMSSPRILLKPTELVLMDKDRKRNIREQQQIDQYQWSRFLLPNDEIILACGITEKRSGLITKKRQLIITDTPRIFYVDPVKMTQKGEITVDGSLSAQQKSSKHFIINSKGRSRHFYDLDGQSKLWVDLINELNMLSFK.

3 stretches are compositionally biased toward low complexity: residues 53 to 170 (NNNF…SSSL), 179 to 189 (YSDSSDSIDSY), and 200 to 216 (QQQQ…QPLH). Residues 53 to 267 (NNNFNNNNNN…PNSSIPHKKS (215 aa)) form a disordered region. The span at 250–262 (KTSSFGLQPNSSI) shows a compositional bias: polar residues. In terms of domain architecture, Protein kinase spans 271–527 (FDFIRTIGKG…ISEIKNHEFF (257 aa)). Residues 281 to 283 (AYG) and Lys-300 each bind ATP. The interval 302–346 (LNKKLIIKEKKAKYVNTEKTILDSLDNPNIVKLFYTFQDENNLYF) is PIF-pocket. ATP-binding positions include 349–351 (EYC) and Asp-355. Residue Asp-394 is the Proton acceptor of the active site. ATP is bound by residues Glu-398 and Asp-412. Disordered stretches follow at residues 538-560 (SQTP…NSSL) and 606-755 (ISNN…KNLQ). Positions 607 to 684 (SNNNNNNNNT…PAYSSTPSST (78 aa)) are enriched in low complexity. Over residues 696–709 (SSCSSNNLLGKSSN) the composition is skewed to polar residues. Positions 710 to 741 (QQYQPFQFHQQQQQQQQQQQRERSSTTTPSPT) are enriched in low complexity. In terms of domain architecture, PH spans 764–902 (SSFSTSSPMS…KLWVDLINEL (139 aa)).

The protein belongs to the protein kinase superfamily. AGC Ser/Thr protein kinase family. PDPK1 subfamily.

It carries out the reaction L-seryl-[protein] + ATP = O-phospho-L-seryl-[protein] + ADP + H(+). The enzyme catalyses L-threonyl-[protein] + ATP = O-phospho-L-threonyl-[protein] + ADP + H(+). This Dictyostelium discoideum (Social amoeba) protein is 3-phosphoinositide-dependent protein kinase B (pdkB).